The primary structure comprises 409 residues: Elongation factor Tu, chloroplastic (409 aa).

In terms of domain architecture, tr-type G spans 10–214; the sequence is KPHVNIGTIG…AVDEYIPTPE (205 aa). The interval 19–26 is G1; the sequence is GHVDHGKT. GTP is bound at residue 19–26; sequence GHVDHGKT. Thr-26 serves as a coordination point for Mg(2+). Positions 60–64 are G2; that stretch reads GITIN. A G3 region spans residues 81 to 84; it reads DCPG. Residues 81 to 85 and 136 to 139 each bind GTP; these read DCPGH and NKED. The segment at 136 to 139 is G4; sequence NKED. Residues 174–176 are G5; sequence SAL.

The protein belongs to the TRAFAC class translation factor GTPase superfamily. Classic translation factor GTPase family. EF-Tu/EF-1A subfamily.

The protein localises to the plastid. It is found in the chloroplast. The enzyme catalyses GTP + H2O = GDP + phosphate + H(+). GTP hydrolase that promotes the GTP-dependent binding of aminoacyl-tRNA to the A-site of ribosomes during protein biosynthesis. This chain is Elongation factor Tu, chloroplastic (tufA), found in Trieres chinensis (Marine centric diatom).